The primary structure comprises 238 residues: Probable transcriptional regulatory protein SERP0322 (238 aa).

It belongs to the TACO1 family. YeeN subfamily.

It localises to the cytoplasm. In Staphylococcus epidermidis (strain ATCC 35984 / DSM 28319 / BCRC 17069 / CCUG 31568 / BM 3577 / RP62A), this protein is Probable transcriptional regulatory protein SERP0322.